A 294-amino-acid chain; its full sequence is Extracellular metalloprotease TRV_07111 (294 aa).

The signal sequence occupies residues 1-19 (MRFSVVFAAIAALSSVVTA). N-linked (GlcNAc...) asparagine glycosylation is found at Asn-49, Asn-54, and Asn-74. His-185 lines the Zn(2+) pocket. The active site involves Glu-186. Residue His-189 participates in Zn(2+) binding. The cysteines at positions 224 and 250 are disulfide-linked.

Belongs to the peptidase M43B family.

The protein resides in the secreted. Its function is as follows. Secreted metalloproteinase that allows assimilation of proteinaceous substrates. Plays a pivotal role as a pathogenicity determinant during infections and contributes to the ability of the pathogen to persist within the mammalian host. This is Extracellular metalloprotease TRV_07111 from Trichophyton verrucosum (strain HKI 0517).